Here is a 445-residue protein sequence, read N- to C-terminus: MRLFGTDGVRGKAGEFLDSFLAMRLAMAAGIYFKDKSITNNILVGKDTRRSGYMIENAIVSGLTSIGYNVIQIGPMPTPAIAFLTEDMRCDAGIMISASHNPYYDNGIKFFDAHGNKLSEDIEKKIEEIYFDDKLIQASKVDMEKIGQAKRIDDVIGRYIVSIKNSFPKDLTLKSLRVVLDVAHGAAYKVAPTVFKELGAEVIVMSDKPNGLNINENCGALHPVNLAAEVKRLRADVGFAFDGDADRLVVVDEKGEVANGDSLLGVLALYLKEQGKLQSSVVATIMSNGALKEFLNKHGIELDTCNVGDKYVLEKLKANGGNFGGEQSGHIIFSDYAKTGDGLIAALQFSALMLSKKKSASSILGQVKPYPQLLINLKIAEKKDLDKIKGLKELKKDLENKNINTLFRYSGTENLIRLLLEARDIKLLEKEMKNVVEFFKKALNG.

Serine 99 functions as the Phosphoserine intermediate in the catalytic mechanism. Mg(2+) contacts are provided by serine 99, aspartate 242, aspartate 244, and aspartate 246. Serine 99 bears the Phosphoserine mark.

Belongs to the phosphohexose mutase family. It depends on Mg(2+) as a cofactor. Post-translationally, activated by phosphorylation.

It catalyses the reaction alpha-D-glucosamine 1-phosphate = D-glucosamine 6-phosphate. In terms of biological role, catalyzes the conversion of glucosamine-6-phosphate to glucosamine-1-phosphate. This is Phosphoglucosamine mutase from Campylobacter jejuni (strain RM1221).